Here is a 359-residue protein sequence, read N- to C-terminus: MRNRFGSLFSLTTWGESHGPSIGVVIDGCPAGLLLDPEDFIPAMSRRSPGRPGTSPRKEADIVHILSGVYQGKTTGTPISLQIFNTDVKSATYHQQEDRYRPGHGQLAYEKKYGLVDPLGGGRSSARETACRVAAGVIAAKILAHYDIYCLAFLSKLGKESIETYPKLSKEFAQNIYNSPFLSPLDNDSILQTLTHLQNEQDSLGGVVSFITSPIHESLGEPVFNKVQAVLASGLMSIPAAKGFEIGLGFASTDSYGSEYIDPFIIENENISMGSNNCGGSLGGITVGMPLNGRVAFKPTSSIRKPFLTVTKTGEPSIYATQKEGRHDPCVAIRAVAVVEAMVNLVLADLLLQQRCARL.

R47 serves as a coordination point for NADP(+). Residues 123–125, G283, 298–302, and R326 each bind FMN; these read RSS and KPTSS.

It belongs to the chorismate synthase family. In terms of assembly, homotetramer. FMNH2 is required as a cofactor.

The enzyme catalyses 5-O-(1-carboxyvinyl)-3-phosphoshikimate = chorismate + phosphate. Its pathway is metabolic intermediate biosynthesis; chorismate biosynthesis; chorismate from D-erythrose 4-phosphate and phosphoenolpyruvate: step 7/7. Its function is as follows. Catalyzes the anti-1,4-elimination of the C-3 phosphate and the C-6 proR hydrogen from 5-enolpyruvylshikimate-3-phosphate (EPSP) to yield chorismate, which is the branch point compound that serves as the starting substrate for the three terminal pathways of aromatic amino acid biosynthesis. This reaction introduces a second double bond into the aromatic ring system. This Chlamydia caviae (strain ATCC VR-813 / DSM 19441 / 03DC25 / GPIC) (Chlamydophila caviae) protein is Chorismate synthase.